Here is a 159-residue protein sequence, read N- to C-terminus: 2-C-methyl-D-erythritol 2,4-cyclodiphosphate synthase (159 aa).

Residues Asp8 and His10 each coordinate a divalent metal cation. 4-CDP-2-C-methyl-D-erythritol 2-phosphate-binding positions include 8–10 (DVH) and 34–35 (HS). His42 contacts a divalent metal cation. Residues 56-58 (DIG), 61-65 (FPDTD), 100-106 (AQAPKML), 132-135 (TTTE), Phe139, and Arg142 each bind 4-CDP-2-C-methyl-D-erythritol 2-phosphate.

This sequence belongs to the IspF family. Homotrimer. The cofactor is a divalent metal cation.

The enzyme catalyses 4-CDP-2-C-methyl-D-erythritol 2-phosphate = 2-C-methyl-D-erythritol 2,4-cyclic diphosphate + CMP. Its pathway is isoprenoid biosynthesis; isopentenyl diphosphate biosynthesis via DXP pathway; isopentenyl diphosphate from 1-deoxy-D-xylulose 5-phosphate: step 4/6. Its function is as follows. Involved in the biosynthesis of isopentenyl diphosphate (IPP) and dimethylallyl diphosphate (DMAPP), two major building blocks of isoprenoid compounds. Catalyzes the conversion of 4-diphosphocytidyl-2-C-methyl-D-erythritol 2-phosphate (CDP-ME2P) to 2-C-methyl-D-erythritol 2,4-cyclodiphosphate (ME-CPP) with a corresponding release of cytidine 5-monophosphate (CMP). The chain is 2-C-methyl-D-erythritol 2,4-cyclodiphosphate synthase from Salmonella typhimurium (strain LT2 / SGSC1412 / ATCC 700720).